The chain runs to 290 residues: MLENVKKSLFRVLCLGALCLGGLMAEQDPKELVGLGAKSYKEQDFTQAKKYFEKACDLKENSGCFNLGVLYYQGHGVEKNLKKAASFYSKACDLNYSNGCHLLGNLYYSGQGVSQNTNKALQYYSKACDLKYAEGCASLGGIYHDGKVVTRDFKKAVEYFTKACDLNDGDGCTILGSLYDAGRGTPKDLKKALASYDKACDLKDSPGCFNAGNMYHHGEGAAKNFKEALARYSKACELENGGGCFNLGAMQYNGEGATRNEKQAIENFKKGCKLGAKGACDILKQLKIKV.

The signal sequence occupies residues Met-1–Ala-25. 7 TPR repeats span residues Pro-29–Ser-62, Cys-64–Asn-98, Cys-100–Ala-133, Glu-134–Asp-170, Cys-172–Ser-205, Pro-206–Gly-242, and Cys-244–Gly-278. Intrachain disulfides connect Cys-56–Cys-64, Cys-92–Cys-100, Cys-128–Cys-136, Cys-164–Cys-172, Cys-200–Cys-208, Cys-236–Cys-244, and Cys-272–Cys-280.

This sequence belongs to the hcp beta-lactamase family.

It is found in the secreted. It carries out the reaction a beta-lactam + H2O = a substituted beta-amino acid. In terms of biological role, may hydrolyze 6-aminopenicillinic acid and 7-aminocephalosporanic acid (ACA) derivatives. The sequence is that of Putative beta-lactamase HcpC (hcpC) from Helicobacter pylori (strain J99 / ATCC 700824) (Campylobacter pylori J99).